Here is a 185-residue protein sequence, read N- to C-terminus: Ribosome-recycling factor (185 aa).

It belongs to the RRF family.

The protein resides in the cytoplasm. Functionally, responsible for the release of ribosomes from messenger RNA at the termination of protein biosynthesis. May increase the efficiency of translation by recycling ribosomes from one round of translation to another. The protein is Ribosome-recycling factor of Campylobacter concisus (strain 13826).